A 475-amino-acid chain; its full sequence is Aspartyl/glutamyl-tRNA(Asn/Gln) amidotransferase subunit B (475 aa).

The protein belongs to the GatB/GatE family. GatB subfamily. As to quaternary structure, heterotrimer of A, B and C subunits.

The enzyme catalyses L-glutamyl-tRNA(Gln) + L-glutamine + ATP + H2O = L-glutaminyl-tRNA(Gln) + L-glutamate + ADP + phosphate + H(+). It catalyses the reaction L-aspartyl-tRNA(Asn) + L-glutamine + ATP + H2O = L-asparaginyl-tRNA(Asn) + L-glutamate + ADP + phosphate + 2 H(+). Functionally, allows the formation of correctly charged Asn-tRNA(Asn) or Gln-tRNA(Gln) through the transamidation of misacylated Asp-tRNA(Asn) or Glu-tRNA(Gln) in organisms which lack either or both of asparaginyl-tRNA or glutaminyl-tRNA synthetases. The reaction takes place in the presence of glutamine and ATP through an activated phospho-Asp-tRNA(Asn) or phospho-Glu-tRNA(Gln). The chain is Aspartyl/glutamyl-tRNA(Asn/Gln) amidotransferase subunit B from Trichlorobacter lovleyi (strain ATCC BAA-1151 / DSM 17278 / SZ) (Geobacter lovleyi).